We begin with the raw amino-acid sequence, 327 residues long: Phenylalanine--tRNA ligase alpha subunit (327 aa).

Glu252 serves as a coordination point for Mg(2+).

The protein belongs to the class-II aminoacyl-tRNA synthetase family. Phe-tRNA synthetase alpha subunit type 1 subfamily. In terms of assembly, tetramer of two alpha and two beta subunits. Requires Mg(2+) as cofactor.

It localises to the cytoplasm. The enzyme catalyses tRNA(Phe) + L-phenylalanine + ATP = L-phenylalanyl-tRNA(Phe) + AMP + diphosphate + H(+). This chain is Phenylalanine--tRNA ligase alpha subunit, found in Shewanella sediminis (strain HAW-EB3).